We begin with the raw amino-acid sequence, 219 residues long: Cytidylate kinase (219 aa).

ATP is bound at residue 21–29 (GPAASGKGT).

The protein belongs to the cytidylate kinase family. Type 1 subfamily.

The protein resides in the cytoplasm. The enzyme catalyses CMP + ATP = CDP + ADP. The catalysed reaction is dCMP + ATP = dCDP + ADP. The sequence is that of Cytidylate kinase from Rickettsia prowazekii (strain Madrid E).